The chain runs to 247 residues: MSNVKTAMDTSNEESQLSYNASTSSSCAAGKEHATTPPITPIGSPTALGMGAFAIAFTTLSMSLMEWRGAAITNAYIGNCFFTAGLGLVLVAQWELVRGNSYGHTVFGGFGLFNLAFGAINAPAFGVADAFKDDPAALSNALGYFLLVWGVFVLFFTIAAMPMNLVYTAMLGTSQITYTLLAASYFAMADEKATAGVGLKKAAGAFGFVSGLLAWYVVAHLMCQDALFFSFPLGDTSRLYARLRRNR.

Asn-20 carries an N-linked (GlcNAc...) asparagine glycan. Transmembrane regions (helical) follow at residues 37 to 57 (PPIT…AIAF), 71 to 91 (AITN…LVLV), 106 to 126 (VFGG…PAFG), 141 to 161 (ALGY…IAAM), 169 to 189 (AMLG…FAMA), and 202 to 222 (AAGA…AHLM).

Belongs to the acetate uptake transporter (AceTr) (TC 2.A.96) family.

It is found in the endoplasmic reticulum membrane. It functions in the pathway mycotoxin biosynthesis; patulin biosynthesis. In terms of biological role, acetate transporter protein; part of the gene cluster that mediates the biosynthesis of patulin, an acetate-derived tetraketide mycotoxin produced by several fungal species that shows antimicrobial properties against several bacteria. May be involved in the uptake of acetate, a substrate for the synthesis of 6-methylsalicylic acid by the polyketide synthase patK. In Aspergillus clavatus (strain ATCC 1007 / CBS 513.65 / DSM 816 / NCTC 3887 / NRRL 1 / QM 1276 / 107), this protein is Acetate transporter protein patA.